The primary structure comprises 425 residues: Adenylosuccinate synthetase (425 aa).

Residues 12 to 18 (GDEGKAK) and 40 to 42 (GHT) contribute to the GTP site. The active-site Proton acceptor is the aspartate 13. Residues aspartate 13 and glycine 40 each coordinate Mg(2+). IMP-binding positions include 13–16 (DEGK), 38–41 (NAGH), threonine 130, arginine 144, glutamine 224, threonine 239, and arginine 303. Histidine 41 functions as the Proton donor in the catalytic mechanism. 299-305 (ATTGRPR) provides a ligand contact to substrate. GTP-binding positions include arginine 305, 331–333 (KID), and 411–413 (STG).

Belongs to the adenylosuccinate synthetase family. As to quaternary structure, homodimer. Mg(2+) serves as cofactor.

It is found in the cytoplasm. It catalyses the reaction IMP + L-aspartate + GTP = N(6)-(1,2-dicarboxyethyl)-AMP + GDP + phosphate + 2 H(+). It participates in purine metabolism; AMP biosynthesis via de novo pathway; AMP from IMP: step 1/2. Its function is as follows. Plays an important role in the de novo pathway of purine nucleotide biosynthesis. Catalyzes the first committed step in the biosynthesis of AMP from IMP. The chain is Adenylosuccinate synthetase from Leptospira interrogans serogroup Icterohaemorrhagiae serovar copenhageni (strain Fiocruz L1-130).